The sequence spans 186 residues: Ribosome-recycling factor (186 aa).

Belongs to the RRF family.

The protein localises to the cytoplasm. Functionally, responsible for the release of ribosomes from messenger RNA at the termination of protein biosynthesis. May increase the efficiency of translation by recycling ribosomes from one round of translation to another. The protein is Ribosome-recycling factor of Burkholderia thailandensis (strain ATCC 700388 / DSM 13276 / CCUG 48851 / CIP 106301 / E264).